The chain runs to 238 residues: MARACLQAVKYLMFAFNLLFWLGGCGVLGVGIWLAATQGSFATLSSSFPSLSAANLLIITGAFVMAIGFVGCLGAIKENKCLLLTFFLLLLLVFLLEATIAILFFAYTDKIDRYAQQDLKKGLHLYGTQGNVGLTNAWSIIQTDFRCCGVSNYTDWFEVYNATRVPDSCCLEFSESCGLHAPGTWWKAPCYETVKVWLQENLLAVGIFGLCTALVQILGLTFAMTMYCQVVKADTYCA.

Topologically, residues 1–13 are cytoplasmic; it reads MARACLQAVKYLM. The chain crosses the membrane as a helical span at residues 14–34; that stretch reads FAFNLLFWLGGCGVLGVGIWL. The Extracellular segment spans residues 35–55; sequence AATQGSFATLSSSFPSLSAAN. Residues 56–76 form a helical membrane-spanning segment; sequence LLIITGAFVMAIGFVGCLGAI. Residues 77–85 are Cytoplasmic-facing; it reads KENKCLLLT. Residues 86–106 traverse the membrane as a helical segment; it reads FFLLLLLVFLLEATIAILFFA. The Extracellular portion of the chain corresponds to 107-201; the sequence is YTDKIDRYAQ…ETVKVWLQEN (95 aa). 2 N-linked (GlcNAc...) asparagine glycosylation sites follow: Asn-152 and Asn-161. The chain crosses the membrane as a helical span at residues 202-222; sequence LLAVGIFGLCTALVQILGLTF. At 223 to 238 the chain is on the cytoplasmic side; that stretch reads AMTMYCQVVKADTYCA.

The protein belongs to the tetraspanin (TM4SF) family. Forms a complex with integrins. Interacts with HRH4. In terms of tissue distribution, expressed in multiple tissues but is absent in brain, lymphoid cells, and platelets.

It localises to the cell membrane. Functionally, structural component of specialized membrane microdomains known as tetraspanin-enriched microdomains (TERMs), which act as platforms for receptor clustering and signaling. Plays an essential role in migrasome formation and migration on retracting fibers at the rear end of migrating cells. Migrasomes are cellular organelles that form as large vesicle-like structures on retraction fibers of migrating cells. Mechanistically, acts as a membrane curvature sensor and participates in stabilizing the migrasome structure in a late stage of biogenesis. May also play a regulatory role for the histamine H4 receptor/HRH4 without affecting histamine binding to HRH4 or signaling. This Homo sapiens (Human) protein is Tetraspanin-4 (TSPAN4).